A 206-amino-acid chain; its full sequence is Pyridoxine/pyridoxamine 5'-phosphate oxidase (206 aa).

FMN is bound by residues 54-59 (RVVLLK), 69-70 (YT), Arg-75, Lys-76, and Gln-98. Lys-59 lines the substrate pocket. Positions 116, 120, and 124 each coordinate substrate. FMN is bound by residues 133 to 134 (QS) and Trp-178. 184-186 (RLH) lines the substrate pocket. Residue Arg-188 coordinates FMN.

It belongs to the pyridoxamine 5'-phosphate oxidase family. Homodimer. The cofactor is FMN.

It carries out the reaction pyridoxamine 5'-phosphate + O2 + H2O = pyridoxal 5'-phosphate + H2O2 + NH4(+). It catalyses the reaction pyridoxine 5'-phosphate + O2 = pyridoxal 5'-phosphate + H2O2. It participates in cofactor metabolism; pyridoxal 5'-phosphate salvage; pyridoxal 5'-phosphate from pyridoxamine 5'-phosphate: step 1/1. The protein operates within cofactor metabolism; pyridoxal 5'-phosphate salvage; pyridoxal 5'-phosphate from pyridoxine 5'-phosphate: step 1/1. Catalyzes the oxidation of either pyridoxine 5'-phosphate (PNP) or pyridoxamine 5'-phosphate (PMP) into pyridoxal 5'-phosphate (PLP). The protein is Pyridoxine/pyridoxamine 5'-phosphate oxidase of Anaplasma phagocytophilum (strain HZ).